Reading from the N-terminus, the 1029-residue chain is MVFLSIPNGKTLSIDVNPNSTTISAFEQLAHQRSDVPQSFLRYSLRMRNPSRVFVDSKDSDSILLSDLGVSRFSTVIIHVLLLGGMQAAPPKPRLDFLNSKPPSNYVAGLGRGATGFTTRSDIGPARAAPDLPDRSALATAAAPGVGRGAGKPSEAEAEDDEEAEEKRYDENQTFDEFEGNDVGLFANAEYDEDDKEADAIWESIDQRMDSRRKDRREAKLKEEIEKYRASNPKITEQFADLKRKLHTLSADEWDSIPEIGDYSLRNKKKKFESFVPIPDTLLEKAKKEKELVMALDPKSRAAGGSETPWGQTPVTDLTAVGEGRGTVLSLKLDNLSDSVSGQTVVDPKGYLTDLKSMKRTTDEEIYDRNRARLLYKSLTQSNPKNPNGWIAAARVEEVDGKIKAARFQIQRGCEECPKNEDVWLEACRLANPEDAKGVIAKGVKLIPNSVKLWLEAAKLEHDVENKSRVLRKGLEHIPDSVRLWKAVVELANEEDARILLHRAVECCPLHLELWVALARLETYAESKKVLNKAREKLPKEPAIWITAAKLEEANGKLDEANDNTAMVGKIIDRGIKTLQREGVVIDRENWMSEAEACERVGSVATCQAIIKNTIGIGVEEEDRKRTWVADADECKKRGSIETARAIYAHALSVFLTKKSIWLKAAQLEKSHGSRESLDALLRKAVTYVPQAEVLWLMGAKEKWLAGDVPAARAILQEAYAAIPNSEEIWLAAFKLEFENKEPERARMLLAKARERGGTERVWMKSAIVERELGNVEEERRLLNEGLKQFPTFFKLWLMLGQLEERFKHLEQARKAYDTGLKHCPHCIPLWLSLADLEEKVNGLNKARAILTTARKKNPGGAELWLAAIRAELRHDNKREAEHLMSKALQDCPKSGILWAADIEMAPRPRRKTKSIDAMKKCDRDPHVTIAVAKLFWQDKKVEKARAWFERAVTVGPDIGDFWALFYKFELQHGSDEDRKEVVAKCVACEPKHGEKWQAISKAVENAHQPIEVILKRVVNALSKEENSA.

Residues 1 to 85 (MVFLSIPNGK…VIIHVLLLGG (85 aa)) form the Ubiquitin-like domain. Gly85 participates in a covalent cross-link: Glycyl lysine isopeptide (Gly-Lys) (interchain with K-? in acceptor proteins). The interval 142 to 170 (AAPGVGRGAGKPSEAEAEDDEEAEEKRYD) is disordered. Residues 210-243 (DSRRKDRREAKLKEEIEKYRASNPKITEQFADLK) adopt a coiled-coil conformation. HAT repeat units lie at residues 367 to 399 (YDRNRARLLYKSLTQSNPKNPNGWIAAARVEEV), 401 to 431 (GKIKAARFQIQRGCEECPKNEDVWLEACRLA), 432 to 462 (NPEDAKGVIAKGVKLIPNSVKLWLEAAKLEH), 463 to 494 (DVENKSRVLRKGLEHIPDSVRLWKAVVELANE), 496 to 524 (DARILLHRAVECCPLHLELWVALARLETY), 526 to 554 (ESKKVLNKAREKLPKEPAIWITAAKLEEA), 639 to 671 (GSIETARAIYAHALSVFLTKKSIWLKAAQLEKS), 673 to 705 (GSRESLDALLRKAVTYVPQAEVLWLMGAKEKWL), 707 to 739 (GDVPAARAILQEAYAAIPNSEEIWLAAFKLEFE), 741 to 772 (KEPERARMLLAKARERGGTERVWMKSAIVERE), 774 to 806 (GNVEEERRLLNEGLKQFPTFFKLWLMLGQLEER), 808 to 840 (KHLEQARKAYDTGLKHCPHCIPLWLSLADLEEK), 842 to 874 (NGLNKARAILTTARKKNPGGAELWLAAIRAELR), 876 to 908 (DNKREAEHLMSKALQDCPKSGILWAADIEMAPR), and 940 to 972 (KKVEKARAWFERAVTVGPDIGDFWALFYKFELQ). One copy of the TPR 1 repeat lies at 625-658 (KRTWVADADECKKRGSIETARAIYAHALSVFLTK). The TPR 2 repeat unit spans residues 794 to 827 (FKLWLMLGQLEERFKHLEQARKAYDTGLKHCPHC). A TPR 3 repeat occupies 926–959 (PHVTIAVAKLFWQDKKVEKARAWFERAVTVGPDI).

Component of a pre-mRNA splicing complex. Interacts with ZOP1. Interacts with PRP31. In terms of tissue distribution, ubiquitous.

The protein resides in the nucleus. Its subcellular location is the cajal body. Its function is as follows. Pre-mRNA splicing factor required for splicing and for the turnover of unstable transcripts. May be a U5 snRNP-associated protein involved in the formation of U4/U6-U5 tri-snRNP. Involved in responses to abiotic stresses. Involved in microRNAs (miRNAs) biogenesis by functioning in primary miRNAs (pri-miRNAs) splicing. Required for DNA methylation and transcriptional silencing through the RNA-directed DNA methylation (RdDM) pathway. This is Protein STABILIZED1 (STA1) from Arabidopsis thaliana (Mouse-ear cress).